A 185-amino-acid chain; its full sequence is C-type lectin domain family 5 member A (185 aa).

The Cytoplasmic segment spans residues 1–4 (MNWH). The helical; Signal-anchor for type II membrane protein transmembrane segment at 5-27 (MIISGLIVVVLKIVGMTFFLLYF) threads the bilayer. Topologically, residues 28–185 (PQIFGEHNVS…YRSICEKSAQ (158 aa)) are extracellular. Residues N35 and N55 are each glycosylated (N-linked (GlcNAc...) asparagine). C68 and C79 are oxidised to a cystine. The C-type lectin domain maps to 75–181 (HQGRCFFLST…CDVNYRSICE (107 aa)). N-linked (GlcNAc...) asparagine glycosylation is found at N90, N117, N141, and N146. Disulfide bonds link C96/C180 and C158/C172.

As to quaternary structure, monomer. Homodimer. The majority of CLEC5A is expressed as a monomeric form on macrophages. Interacts with TYROBP/DAP12. The interaction with TYROBP is required for CLEC5 cell surface expression. Interacts with HCST/DAP10. Forms a CLEC5A/TYROBP/HCST trimolecular complex depending almost solely on TYROBP. N-glycosylated. Contains sialic acid residues. Constitutively expressed in monocytes and macrophages.

Its subcellular location is the cell membrane. Functions as a positive regulator of osteoclastogenesis. Cell surface receptor that signals via TYROBP. Regulates inflammatory responses. This is C-type lectin domain family 5 member A (CLEC5A) from Sus scrofa (Pig).